Reading from the N-terminus, the 138-residue chain is Enhancer of split malpha protein (138 aa).

It belongs to the M4-like protein family.

In terms of biological role, part of the Notch signaling pathway. This is Enhancer of split malpha protein from Drosophila melanogaster (Fruit fly).